A 404-amino-acid chain; its full sequence is Histidine--tRNA ligase (404 aa).

The protein belongs to the class-II aminoacyl-tRNA synthetase family.

The protein resides in the cytoplasm. It carries out the reaction tRNA(His) + L-histidine + ATP = L-histidyl-tRNA(His) + AMP + diphosphate + H(+). The chain is Histidine--tRNA ligase from Nanoarchaeum equitans (strain Kin4-M).